Reading from the N-terminus, the 112-residue chain is Photosystem II reaction center Psb28 protein (112 aa).

Belongs to the Psb28 family. As to quaternary structure, part of the photosystem II complex.

The protein resides in the cellular thylakoid membrane. The sequence is that of Photosystem II reaction center Psb28 protein from Synechococcus elongatus (strain ATCC 33912 / PCC 7942 / FACHB-805) (Anacystis nidulans R2).